The chain runs to 228 residues: Octanoyltransferase (228 aa).

The region spanning 37–217 (AGGPDTLLLL…AVCDALDGRL (181 aa)) is the BPL/LPL catalytic domain. Substrate-binding positions include 75-82 (RGGKITWH), 147-149 (AIG), and 160-162 (GFA). Residue C178 is the Acyl-thioester intermediate of the active site.

The protein belongs to the LipB family.

The protein resides in the cytoplasm. The enzyme catalyses octanoyl-[ACP] + L-lysyl-[protein] = N(6)-octanoyl-L-lysyl-[protein] + holo-[ACP] + H(+). Its pathway is protein modification; protein lipoylation via endogenous pathway; protein N(6)-(lipoyl)lysine from octanoyl-[acyl-carrier-protein]: step 1/2. Functionally, catalyzes the transfer of endogenously produced octanoic acid from octanoyl-acyl-carrier-protein onto the lipoyl domains of lipoate-dependent enzymes. Lipoyl-ACP can also act as a substrate although octanoyl-ACP is likely to be the physiological substrate. This chain is Octanoyltransferase, found in Mycolicibacterium smegmatis (strain ATCC 700084 / mc(2)155) (Mycobacterium smegmatis).